Here is a 492-residue protein sequence, read N- to C-terminus: Probable cytosol aminopeptidase (492 aa).

Mn(2+) contacts are provided by Lys-248 and Asp-253. Residue Lys-260 is part of the active site. Positions 271, 330, and 332 each coordinate Mn(2+). The active site involves Arg-334.

The protein belongs to the peptidase M17 family. Requires Mn(2+) as cofactor.

It is found in the cytoplasm. It catalyses the reaction Release of an N-terminal amino acid, Xaa-|-Yaa-, in which Xaa is preferably Leu, but may be other amino acids including Pro although not Arg or Lys, and Yaa may be Pro. Amino acid amides and methyl esters are also readily hydrolyzed, but rates on arylamides are exceedingly low.. The enzyme catalyses Release of an N-terminal amino acid, preferentially leucine, but not glutamic or aspartic acids.. Functionally, presumably involved in the processing and regular turnover of intracellular proteins. Catalyzes the removal of unsubstituted N-terminal amino acids from various peptides. The chain is Probable cytosol aminopeptidase (pepA) from Aeropyrum pernix (strain ATCC 700893 / DSM 11879 / JCM 9820 / NBRC 100138 / K1).